A 444-amino-acid polypeptide reads, in one-letter code: Aflatoxin biosynthesis regulatory protein (444 aa).

Residues 1 to 26 (MVDHISPRASPGPIRSSQTRRARKLR) are disordered. The segment at residues 29–56 (CTSCASSKVRCTKEKPACARCIERGLAC) is a DNA-binding region (zn(2)-C6 fungal-type). The segment at 64–167 (MGRNPRAPSP…QGLGGDLAGQ (104 aa)) is disordered. Positions 106–116 (TQAHTHAHSHP) are enriched in basic residues. A compositionally biased stretch (low complexity) spans 120 to 130 (PQSHPQSNQPP). The segment covering 136 to 149 (PNGSSSVSAIFSHQ) has biased composition (polar residues).

It localises to the nucleus. It participates in mycotoxin biosynthesis; aflatoxin biosynthesis. Involved in the regulation of aflatoxin biosynthesis. May have a role in nitrate assimilation and sclerotial morphogenesis. The sequence is that of Aflatoxin biosynthesis regulatory protein (aflR) from Aspergillus parasiticus.